A 79-amino-acid polypeptide reads, in one-letter code: UPF0654 protein C11D3.01c (79 aa).

Positions 1–79 (MPNPGNVIGG…RAQEELENLE (79 aa)) are disordered. Basic and acidic residues predominate over residues 22–45 (EETKQREKEYLEEHEGEVGEEHQK).

Belongs to the UPF0654 (con-6) family.

The sequence is that of UPF0654 protein C11D3.01c from Schizosaccharomyces pombe (strain 972 / ATCC 24843) (Fission yeast).